A 721-amino-acid polypeptide reads, in one-letter code: MGPLDVWDLSPLLSLWMNRFYIYMGCALGLTLCICVQIIKKQVTRSQEKRVPGAPDSSLSPQKKQTHVSGVKIFYGSQTGTAKGFAVVLAKAVTSLDLPVAIINLKEYDPDDSLIGEITSKTVCAFLVATYTDGCPTESAEWFCKWLEESANDFRFGKTYLKGLRYAVFGLGDSAYRSHFNKVSTNVDKWLWMLGAQRVLTRGEGDCNAVQSKHGSIEADFTAWKTKFISRLQALQRGEKKACGGNCKRGKCESAQHGPGEARPHPQGELHPGDAEEEEPCESSSEDELGTQDYQSLTSVVDVEDLGNIMNPVKREKREKSHQDGKAAMQRNPEKTEDGEGRAMITPALREALTKQGYQLIGSHSGVKLCRWTKSMLRGRGGCYKHTFYGIESHRCMEATPSLACANKCVFCWRHHTNPVGTEWRWKMDQPELILKEAIENHQNMIKQFKGVPGLKAERFEEGMEVKHCALSLVGEPIMYPEINRLLKLLHQHGISSFLVTNAQFPEEIRKLTPVTQLYVSVDASTRDGLKKIDRPLFKDFWQRFLDSLKALSAKQQRTVYRLTLVKCWNVDELQAYAELVSLGNPDFIEVKGVTYCGESAASSLTMANVPWHEEVVRFVRELVDLLPDYEVACEHEHSNCLLIGHKKFKIDGEWWTWINYSRFQELVLQYEESGGSKTFSSRDYMARTPQWALFGARERGFDPKDTRYQRKNKTKDISGC.

The Flavodoxin-like domain occupies 71–229 (VKIFYGSQTG…DFTAWKTKFI (159 aa)). FMN contacts are provided by residues 77–81 (SQTGT) and 168–200 (VFGL…QRVL). Disordered regions lie at residues 242–291 (ACGG…ELGT) and 305–339 (DLGN…TEDG). Positions 250 to 274 (GKCESAQHGPGEARPHPQGELHPGD) are enriched in basic and acidic residues. Positions 275-290 (AEEEEPCESSSEDELG) are enriched in acidic residues. The span at 313-325 (VKREKREKSHQDG) shows a compositional bias: basic and acidic residues. The region spanning 389–635 (YGIESHRCME…LLPDYEVACE (247 aa)) is the Radical SAM core domain. Cysteine 405, cysteine 409, and cysteine 412 together coordinate [4Fe-4S] cluster.

Belongs to the TYW1 family. [4Fe-4S] cluster serves as cofactor.

It carries out the reaction N(1)-methylguanosine(37) in tRNA(Phe) + pyruvate + S-adenosyl-L-methionine = 4-demethylwyosine(37) in tRNA(Phe) + 5'-deoxyadenosine + L-methionine + CO2 + H2O. Its pathway is tRNA modification; wybutosine-tRNA(Phe) biosynthesis. Functionally, probable component of the wybutosine biosynthesis pathway. Wybutosine is a hyper modified guanosine with a tricyclic base found at the 3'-position adjacent to the anticodon of eukaryotic phenylalanine tRNA. Catalyzes the condensation of N-methylguanine with 2 carbon atoms from pyruvate to form the tricyclic 4-demethylwyosine, an intermediate in wybutosine biosynthesis. The sequence is that of S-adenosyl-L-methionine-dependent tRNA 4-demethylwyosine synthase TYW1 (Tyw1) from Mus musculus (Mouse).